The sequence spans 631 residues: Probable electron transfer flavoprotein-ubiquinone oxidoreductase, mitochondrial (631 aa).

65 to 79 (VCIVGGGPAGLATAI) provides a ligand contact to FAD. [4Fe-4S] cluster contacts are provided by C574, C600, C603, and C606. The 4Fe-4S ferredoxin-type domain maps to 591-620 (TRLQINSQNCIHCKTCDIKAPRQDITWKVP).

This sequence belongs to the ETF-QO/FixC family. It depends on [4Fe-4S] cluster as a cofactor. FAD serves as cofactor.

It localises to the mitochondrion inner membrane. The enzyme catalyses a ubiquinone + reduced [electron-transfer flavoprotein] = a ubiquinol + oxidized [electron-transfer flavoprotein] + H(+). Functionally, accepts electrons from ETF and reduces ubiquinone. The polypeptide is Probable electron transfer flavoprotein-ubiquinone oxidoreductase, mitochondrial (CIR2) (Saccharomyces cerevisiae (strain ATCC 204508 / S288c) (Baker's yeast)).